The following is a 323-amino-acid chain: Aldo-keto reductase family 1 member C18 (323 aa).

Residues 20–24 and D50 contribute to the NADP(+) site; that span reads GFGTY. Y55 acts as the Proton donor in catalysis. H117 contributes to the substrate binding site. NADP(+) is bound by residues 166 to 167, Q190, 216 to 221, and 270 to 280; these read SN, YGALGT, and KSFNEERIREN.

Belongs to the aldo/keto reductase family. In terms of assembly, monomer. The N-terminus is blocked. Corpus luteum (large luteal cells).

The protein resides in the cytoplasm. It catalyses the reaction (17R,20S)-17,20-dihydroxypregn-4-en-3-one + NADP(+) = 17alpha-hydroxyprogesterone + NADPH + H(+). It carries out the reaction (17R,20S)-17,20-dihydroxypregn-4-en-3-one + NAD(+) = 17alpha-hydroxyprogesterone + NADH + H(+). Catalyzes the conversion of progesterone into 20-alpha-dihydroprogesterone (20 alpha-OHP). The polypeptide is Aldo-keto reductase family 1 member C18 (Akr1c18) (Rattus norvegicus (Rat)).